The following is a 334-amino-acid chain: MAASIKDVAREARVSIATVSRVLNNVDVVNEETKKKVMEAIKKLDYRPNIVARSLKTQRTRTIGIVIPDISSQFYPEIVRGAEDVSNIYNYNVILCNTDLDISKEKDYIRVLKEKMVDGVIYMSNSLAPEILQLLRDLKIPTVLVETRESEDENAFPSVTIDNAKAAYDAVNYLIKKGNNKIAYVGVNPKLKNNARAIIYEGYKKALLDNNIPLNENLIQFGGLKAIDGTDGINVIIKKEKIDAVFCACDEIAMGAINALRENGIDVPKDVDVVGFDNIYTSSIFYPKLTTIEQPTYDMGSVGMRMLIKIINKAEPECLHYVLDYNIIERDSCK.

An HTH lacI-type domain is found at methionine 1–threonine 57. The segment at residues isoleucine 5–asparagine 24 is a DNA-binding region (H-T-H motif).

Functionally, involved in the regulation of amylase production. This Clostridium acetobutylicum (strain ATCC 824 / DSM 792 / JCM 1419 / IAM 19013 / LMG 5710 / NBRC 13948 / NRRL B-527 / VKM B-1787 / 2291 / W) protein is HTH-type transcriptional regulator RegA (regA).